The chain runs to 524 residues: Cytochrome P450 monooxygenase patH (524 aa).

Residues 1–4 (MEPF) are Cytoplasmic-facing. Residues 5-22 (LLLLLVLLPAIVLVRYAF) traverse the membrane as a helical segment. Over 23-524 (TYGHRTSTMP…ADVFSRFTEG (502 aa)) the chain is Lumenal. Asparagine 266 is a glycosylation site (N-linked (GlcNAc...) asparagine). Cysteine 442 serves as a coordination point for heme.

The protein belongs to the cytochrome P450 family. The cofactor is heme.

The protein localises to the endoplasmic reticulum membrane. It catalyses the reaction 3-methylphenol + reduced [NADPH--hemoprotein reductase] + O2 = 3-hydroxybenzyl alcohol + oxidized [NADPH--hemoprotein reductase] + H2O + H(+). Its pathway is mycotoxin biosynthesis; patulin biosynthesis. Functionally, cytochrome P450 monooxygenase; part of the gene cluster that mediates the biosynthesis of patulin, an acetate-derived tetraketide mycotoxin produced by several fungal species that shows antimicrobial properties against several bacteria. PatH catalyzes the conversion of m-cresol into m-hydroxybenzyl alcohol. The pathway begins with the synthesis of 6-methylsalicylic acid by the polyketide synthase (PKS) patK via condensation of acetate and malonate units. The 6-methylsalicylic acid decarboxylase patG then catalyzes the decarboxylation of 6-methylsalicylic acid to yield m-cresol (also known as 3-methylphenol). These first reactions occur in the cytosol. The intermediate m-cresol is then transported into the endoplasmic reticulum where the cytochrome P450 monooxygenase patH converts it to m-hydroxybenzyl alcohol, which is further converted to gentisyl alcohol by the cytochrome P450 monooxygenase patI. The oxidoreductases patJ and patO further convert gentisyl alcohol to isoepoxydon in the vacuole. PatN catalyzes then the transformation of isoepoxydon into phyllostine. The cluster protein patF is responsible for the conversion from phyllostine to neopatulin whereas the alcohol dehydrogenase patD converts neopatulin to E-ascladiol. The steps between isoepoxydon and E-ascladiol occur in the cytosol, and E-ascladiol is probably secreted to the extracellular space by one of the cluster-specific transporters patC or patM. Finally, the secreted patulin synthase patE catalyzes the conversion of E-ascladiol to patulin. This is Cytochrome P450 monooxygenase patH from Penicillium expansum (Blue mold rot fungus).